We begin with the raw amino-acid sequence, 355 residues long: Uroporphyrinogen decarboxylase (355 aa).

Residues 27–31 (RQAGR), aspartate 78, tyrosine 155, serine 210, and histidine 328 contribute to the substrate site.

This sequence belongs to the uroporphyrinogen decarboxylase family. As to quaternary structure, homodimer.

The protein resides in the cytoplasm. The enzyme catalyses uroporphyrinogen III + 4 H(+) = coproporphyrinogen III + 4 CO2. Its pathway is porphyrin-containing compound metabolism; protoporphyrin-IX biosynthesis; coproporphyrinogen-III from 5-aminolevulinate: step 4/4. In terms of biological role, catalyzes the decarboxylation of four acetate groups of uroporphyrinogen-III to yield coproporphyrinogen-III. The chain is Uroporphyrinogen decarboxylase from Pseudomonas aeruginosa (strain UCBPP-PA14).